The following is a 621-amino-acid chain: GPI-anchor transamidase component GPAA1 (621 aa).

Over 2 to 19 (GLLSDPVRRRALARLVLR) the chain is Cytoplasmic. The chain crosses the membrane as a helical span at residues 20 to 41 (LNAPLCVLSYVAGIAWFLALVF). The Lumenal segment spans residues 42–370 (PPLTQRTYMS…LLPGLSRFVS (329 aa)). A 2-acyl-6-[6-phosphoethanolamine-alpha-D-mannosyl-(1-&gt;2)-6-phosphoethanolamine-alpha-D-mannosyl-(1-&gt;6)-2-phosphoethanolamine-alpha-D-mannosyl-(1-&gt;4)-alpha-D-glucosaminyl]-1-(1-radyl,2-acyl-sn-glycero-3-phospho)-1D-myo-inositol-binding residues include Tyr-49 and Ser-51. The N-linked (GlcNAc...) asparagine glycan is linked to Asn-203. Cysteines 259 and 266 form a disulfide. A 2-acyl-6-[6-phosphoethanolamine-alpha-D-mannosyl-(1-&gt;2)-6-phosphoethanolamine-alpha-D-mannosyl-(1-&gt;6)-2-phosphoethanolamine-alpha-D-mannosyl-(1-&gt;4)-alpha-D-glucosaminyl]-1-(1-radyl,2-acyl-sn-glycero-3-phospho)-1D-myo-inositol-binding residues include His-354, Gln-355, and Ser-356. Position 355 (Gln-355) interacts with Mg(2+). Residues 371 to 393 (IGLYMPAVGFLLLVLGLKALELW) traverse the membrane as a helical segment. At 394–425 (MQLHEAGMGLEEPGGAPGPSVPLPPSQGVGLA) the chain is on the cytoplasmic side. A helical membrane pass occupies residues 426-450 (SLVAPLLISQAMGLALYVLPVLGQH). At 451 to 462 (VATQHFPVAEAE) the chain is on the lumenal side. The helical transmembrane segment at 463-483 (AVVLTLLAIYAAGLALPHNTH) threads the bilayer. The Cytoplasmic portion of the chain corresponds to 484–495 (RVVSTQAPDRGW). A run of 2 helical transmembrane segments spans residues 496–519 (MALKLVALIYLALQLGCIALTNFS) and 520–536 (LGFLLATTMVPTAALAK). Residues 537–540 (PHGP) are Cytoplasmic-facing. Residues 541–563 (RTLYAALLVLTSPAATLLGSLFL) traverse the membrane as a helical segment. At 564-597 (WRELQEAPLSLAEGWQLFLAALAQGVLEHHTYGA) the chain is on the lumenal side. Residues 598–619 (LLFPLLSLGLYPCWLLFWNVLF) traverse the membrane as a helical segment. The Cytoplasmic segment spans residues 620 to 621 (WK).

As to quaternary structure, heteropentamer. Part of the GPI-anchor transamidase complex, consisting of PIGK, PIGT, PIGS, PIGU and GAA1. Interacts with PIGK. Ubiquitously expressed in fetal and adult tissues. Expressed at higher levels in fetal tissues than adult tissues.

It is found in the endoplasmic reticulum membrane. It functions in the pathway glycolipid biosynthesis; glycosylphosphatidylinositol-anchor biosynthesis. In terms of biological role, component of the glycosylphosphatidylinositol-anchor (GPI-anchor) transamidase (GPI-T) complex that catalyzes the formation of the linkage between a proprotein and a GPI-anchor and participates in GPI anchored protein biosynthesis. Binds GPI-anchor. In Homo sapiens (Human), this protein is GPI-anchor transamidase component GPAA1.